Reading from the N-terminus, the 94-residue chain is Co-chaperonin GroES (94 aa).

It belongs to the GroES chaperonin family. As to quaternary structure, heptamer of 7 subunits arranged in a ring. Interacts with the chaperonin GroEL.

It localises to the cytoplasm. Its function is as follows. Together with the chaperonin GroEL, plays an essential role in assisting protein folding. The GroEL-GroES system forms a nano-cage that allows encapsulation of the non-native substrate proteins and provides a physical environment optimized to promote and accelerate protein folding. GroES binds to the apical surface of the GroEL ring, thereby capping the opening of the GroEL channel. The sequence is that of Co-chaperonin GroES from Enterococcus faecalis (strain ATCC 700802 / V583).